A 289-amino-acid polypeptide reads, in one-letter code: Serine/threonine-protein phosphatase Pgam5, mitochondrial (289 aa).

This sequence belongs to the phosphoglycerate mutase family. BPG-dependent PGAM subfamily. In terms of assembly, interacts with Pk92B/ASK1.

Its subcellular location is the mitochondrion outer membrane. It carries out the reaction O-phospho-L-seryl-[protein] + H2O = L-seryl-[protein] + phosphate. The catalysed reaction is O-phospho-L-threonyl-[protein] + H2O = L-threonyl-[protein] + phosphate. In terms of biological role, displays phosphatase activity for serine/threonine residues, and dephosphorylates and activates Pk92B kinase. Has apparently no phosphoglycerate mutase activity. The protein is Serine/threonine-protein phosphatase Pgam5, mitochondrial of Drosophila mojavensis (Fruit fly).